The primary structure comprises 439 residues: Gap junction gamma-2 protein (439 aa).

Topologically, residues 1 to 25 are cytoplasmic; that stretch reads MTNMSWSFLTRLLEEIHNHSTFVGK. A helical transmembrane segment spans residues 26 to 46; that stretch reads VWLTVLVVFRIVLTAVGGEAI. Residues 47–78 are Extracellular-facing; it reads YSDEQAKFTCNTRQPGCDNVCYDAFAPLSHVR. Residues 79-99 form a helical membrane-spanning segment; the sequence is FWVFQIVVISTPSVMYLGYAV. At 100-216 the chain is on the cytoplasmic side; the sequence is HRLARASEQE…EGLMRVYVAQ (117 aa). Residues 108 to 178 form a disordered region; the sequence is QERRRALRRR…AEEAGAEEAC (71 aa). Residues 112–125 show a composition bias toward basic residues; that stretch reads RALRRRPGPRRAPR. Residues 140 to 174 show a composition bias toward acidic residues; sequence DLGEEEPMLGLGEEEEEEETGAAEGAGEEAEEAGA. Residues 217–237 traverse the membrane as a helical segment; it reads LVARAAFEVAFLVGQYLLYGF. At 238 to 265 the chain is on the extracellular side; the sequence is EVRPFFPCSRQPCPHVVDCFVSRPTEKT. Residues 266-286 traverse the membrane as a helical segment; it reads VFLLVMYVVSCLCLLLNLCEM. Residues 287–439 lie on the Cytoplasmic side of the membrane; that stretch reads AHLGLGSAQD…SRDGKTTVWI (153 aa). The interval 364–439 is disordered; that stretch reads AGDRDRDSSP…SRDGKTTVWI (76 aa). Ser371 carries the post-translational modification Phosphoserine. A compositionally biased stretch (low complexity) spans 378–393; it reads PAASRGPPRAGAPASR.

This sequence belongs to the connexin family. Gamma-type subfamily. In terms of assembly, a connexon is composed of a hexamer of connexins. Interacts with TJP1. As to expression, expressed in central nervous system, in sciatic nerve and sural nerve. Also detected in skeletal muscles.

Its subcellular location is the cell membrane. It localises to the cell junction. The protein resides in the gap junction. Its function is as follows. One gap junction consists of a cluster of closely packed pairs of transmembrane channels, the connexons, through which materials of low MW diffuse from one cell to a neighboring cell. May play a role in myelination in central and peripheral nervous systems. The polypeptide is Gap junction gamma-2 protein (GJC2) (Homo sapiens (Human)).